A 461-amino-acid chain; its full sequence is Photosystem II CP43 reaction center protein (461 aa).

A run of 5 helical transmembrane segments spans residues 57 to 81 (LFEVAHFVPEKPMYEQGIILLSHLA), 122 to 143 (LRGPESLEEYSTFFSQDWKDKN), 166 to 188 (KAMFFGGVYDTWAPGGGDVRIIS), 243 to 263 (KPFGWVRRAFIWNGEAYLSYS), and 279 to 300 (WYNNTVYPSEFFGPTAAEASQS). [CaMn4O5] cluster is bound at residue glutamate 355. A helical membrane pass occupies residues 435–459 (RARAAAAGFEKGIDRATEPVLAMRD).

It belongs to the PsbB/PsbC family. PsbC subfamily. In terms of assembly, PSII is composed of 1 copy each of membrane proteins PsbA, PsbB, PsbC, PsbD, PsbE, PsbF, PsbH, PsbI, PsbJ, PsbK, PsbL, PsbM, PsbT, PsbX, PsbY, PsbZ, Psb30/Ycf12, peripheral proteins PsbO, CyanoQ (PsbQ), PsbU, PsbV and a large number of cofactors. It forms dimeric complexes. Requires Binds multiple chlorophylls and provides some of the ligands for the Ca-4Mn-5O cluster of the oxygen-evolving complex. It may also provide a ligand for a Cl- that is required for oxygen evolution. PSII binds additional chlorophylls, carotenoids and specific lipids. as cofactor.

The protein localises to the cellular thylakoid membrane. One of the components of the core complex of photosystem II (PSII). It binds chlorophyll and helps catalyze the primary light-induced photochemical processes of PSII. PSII is a light-driven water:plastoquinone oxidoreductase, using light energy to abstract electrons from H(2)O, generating O(2) and a proton gradient subsequently used for ATP formation. This chain is Photosystem II CP43 reaction center protein, found in Synechococcus elongatus (strain ATCC 33912 / PCC 7942 / FACHB-805) (Anacystis nidulans R2).